A 514-amino-acid polypeptide reads, in one-letter code: Na(+)/H(+) antiporter NhaB (514 aa).

Helical transmembrane passes span 13–33 (FMGN…IINP), 34–54 (LIFF…EFIF), 96–116 (VILL…LLLF), 136–156 (CFAS…AVVI), 203–223 (LMMH…VGEP), 236–256 (FVTF…AGLA), 304–324 (ALIG…VGII), 349–369 (EEAL…AVII), 392–412 (LFYL…VGTV), 448–468 (ATPN…SPLI), and 479–499 (ALPY…FWLV).

It belongs to the NhaB Na(+)/H(+) (TC 2.A.34) antiporter family.

It is found in the cell inner membrane. The catalysed reaction is 2 Na(+)(in) + 3 H(+)(out) = 2 Na(+)(out) + 3 H(+)(in). Its function is as follows. Na(+)/H(+) antiporter that extrudes sodium in exchange for external protons. The sequence is that of Na(+)/H(+) antiporter NhaB from Proteus mirabilis (strain HI4320).